The chain runs to 168 residues: Protein B-Myc (168 aa).

Disordered stretches follow at residues 26-94 (DDEE…DLPE) and 146-168 (EGAS…TCNT). Phosphoserine is present on residues S59 and S67.

It localises to the nucleus. Its function is as follows. Seems to act as an inhibitor of cellular proliferation. The protein is Protein B-Myc (Mycb) of Rattus norvegicus (Rat).